Reading from the N-terminus, the 388-residue chain is Calreticulin (388 aa).

Residues 1-17 (MQLSLLVGLVCFSAINA) form the signal peptide. Cys103 and Cys135 form a disulfide bridge. Tyr107, Lys109, Tyr126, and Asp133 together coordinate an alpha-D-glucoside. 7 consecutive repeat copies span residues 189-200 (AESGELEADWDF), 208-219 (DPDAKKPEDWDE), 225-236 (DEDDKKPEDWDK), 242-253 (DPDAKKPEDWDD), 257-267 (GEWEPPMVDNP), 271-281 (GEWKPKQKKNP), and 285-295 (GKWIHPEIEIP). Residues 189–253 (AESGELEADW…DAKKPEDWDD (65 aa)) form a 4 X approximate repeats region. The interval 193 to 282 (ELEADWDFLP…WKPKQKKNPA (90 aa)) is disordered. Over residues 205 to 215 (KIKDPDAKKPE) the composition is skewed to basic and acidic residues. Over residues 216 to 227 (DWDEREFIDDED) the composition is skewed to acidic residues. Residues 228-249 (DKKPEDWDKPEHIPDPDAKKPE) are compositionally biased toward basic and acidic residues. Over residues 250–259 (DWDDEMDGEW) the composition is skewed to acidic residues. The interval 257-295 (GEWEPPMVDNPEYKGEWKPKQKKNPAYKGKWIHPEIEIP) is 3 X approximate repeats. An an alpha-D-glucoside-binding site is contributed by Asp315. The segment at 349–388 (REGEKKKGKKTKKQKKKEKNEKIKKEKMKKRKRANRKKKK) is disordered. Basic residues-rich tracts occupy residues 354 to 365 (KKGKKTKKQKKK) and 373 to 388 (KEKM…KKKK).

It belongs to the calreticulin family.

It localises to the endoplasmic reticulum lumen. Functionally, molecular calcium-binding chaperone promoting folding, oligomeric assembly and quality control in the ER via the calreticulin/calnexin cycle. This lectin may interact transiently with almost all of the monoglucosylated glycoproteins that are synthesized in the ER. In Onchocerca volvulus, this protein is Calreticulin (crt-1).